A 74-amino-acid polypeptide reads, in one-letter code: MEIKYLLTVFLVLLIVSDHCQAFLFSLIPSAISGLISAFKGRRKRDLNGYIDHFKNFRKRDAELEELLSKLPIY.

Positions 1 to 22 (MEIKYLLTVFLVLLIVSDHCQA) are cleaved as a signal peptide. Residue K40 is modified to Lysine amide. A propeptide spanning residues 46–74 (DLNGYIDHFKNFRKRDAELEELLSKLPIY) is cleaved from the precursor.

The protein belongs to the non-disulfide-bridged peptide (NDBP) superfamily. Short antimicrobial peptide (group 4) family. As to expression, expressed by the venom gland.

Its subcellular location is the secreted. The protein resides in the target cell membrane. Has antibacterial activity against Gram-positive bacteria S.aureus, M.luteus, B.subtilis, and Gram-negative bacteria E.coli, and P.aeruginosa. This chain is Peptide BmKb1, found in Olivierus martensii (Manchurian scorpion).